We begin with the raw amino-acid sequence, 121 residues long: Probable K(+)/H(+) antiporter subunit G (121 aa).

The next 3 membrane-spanning stretches (helical) occupy residues 10–32, 45–67, and 72–94; these read WAAL…GSLG, APTI…CFAV, and WVFH…LMLL.

Belongs to the CPA3 antiporters (TC 2.A.63) subunit G family. May form a hetero-oligomeric complex that consists of six subunits: PhaAB, PhaC, PhaD, PhaE, PhaF and PhaG.

The protein resides in the cell membrane. Part of a K(+) efflux system which is required for the adaptation of R.meliloti to alkaline pH as well as for the infection process during symbiotic nodule development. The sequence is that of Probable K(+)/H(+) antiporter subunit G (phaG) from Rhizobium meliloti (strain 1021) (Ensifer meliloti).